A 71-amino-acid polypeptide reads, in one-letter code: Long neurotoxin 1 (71 aa).

Intrachain disulfides connect Cys-3/Cys-20, Cys-14/Cys-41, Cys-26/Cys-30, Cys-45/Cys-56, and Cys-57/Cys-62.

Belongs to the three-finger toxin family. Long-chain subfamily. Type II alpha-neurotoxin sub-subfamily. Expressed by the venom gland.

It is found in the secreted. Binds with high affinity to muscular (alpha-1/CHRNA1) and neuronal (alpha-7/CHRNA7) nicotinic acetylcholine receptor (nAChR) and inhibits acetylcholine from binding to the receptor, thereby impairing neuromuscular and neuronal transmission. This chain is Long neurotoxin 1, found in Naja naja (Indian cobra).